The chain runs to 235 residues: Chaperone protein TorD (235 aa).

The protein belongs to the TorD/DmsD family. TorD subfamily.

The protein resides in the cytoplasm. Its function is as follows. Involved in the biogenesis of TorA. Acts on TorA before the insertion of the molybdenum cofactor and, as a result, probably favors a conformation of the apoenzyme that is competent for acquiring the cofactor. This Shewanella amazonensis (strain ATCC BAA-1098 / SB2B) protein is Chaperone protein TorD.